Consider the following 663-residue polypeptide: DNA topoisomerase 4 subunit B (663 aa).

Residues Tyr-7, Asn-47, Asp-74, 114–120, and Lys-341 each bind ATP; that span reads GLHGVGA. The segment at 386 to 418 is disordered; sequence REAARKAREDARSGKKNKRKDTLLSGKLTPAQS. Residues 387–398 show a composition bias toward basic and acidic residues; it reads EAARKAREDARS. The Toprim domain occupies 424–538; sequence NELYLVEGDS…AGRVFIALPP (115 aa). Positions 430, 503, and 505 each coordinate Mg(2+).

It belongs to the type II topoisomerase family. ParE type 2 subfamily. Heterotetramer composed of ParC and ParE. Requires Mg(2+) as cofactor. The cofactor is Mn(2+). Ca(2+) serves as cofactor.

It carries out the reaction ATP-dependent breakage, passage and rejoining of double-stranded DNA.. Functionally, topoisomerase IV is essential for chromosome segregation. It relaxes supercoiled DNA. Performs the decatenation events required during the replication of a circular DNA molecule. This Staphylococcus aureus (strain MRSA252) protein is DNA topoisomerase 4 subunit B.